A 210-amino-acid chain; its full sequence is LexA repressor (210 aa).

The H-T-H motif DNA-binding region spans 30-50 (RVEIAREIGFKSPNAAEEHLK). Catalysis depends on for autocatalytic cleavage activity residues S127 and K164.

The protein belongs to the peptidase S24 family. As to quaternary structure, homodimer.

It catalyses the reaction Hydrolysis of Ala-|-Gly bond in repressor LexA.. In terms of biological role, represses a number of genes involved in the response to DNA damage (SOS response), including recA and lexA. In the presence of single-stranded DNA, RecA interacts with LexA causing an autocatalytic cleavage which disrupts the DNA-binding part of LexA, leading to derepression of the SOS regulon and eventually DNA repair. This chain is LexA repressor, found in Actinobacillus pleuropneumoniae serotype 5b (strain L20).